Here is a 33-residue protein sequence, read N- to C-terminus: MNIELIVQLTSLILISIAGPIIIALLFVKQGNL.

A helical transmembrane segment spans residues 5–25 (LIVQLTSLILISIAGPIIIAL).

This sequence belongs to the Psb30/Ycf12 family. PSII is composed of 1 copy each of membrane proteins PsbA, PsbB, PsbC, PsbD, PsbE, PsbF, PsbH, PsbI, PsbJ, PsbK, PsbL, PsbM, PsbT, PsbY, PsbZ, Psb30/Ycf12, peripheral proteins of the oxygen-evolving complex and a large number of cofactors. It forms dimeric complexes.

The protein resides in the plastid. Its subcellular location is the chloroplast thylakoid membrane. In terms of biological role, a core subunit of photosystem II (PSII), probably helps stabilize the reaction center. The chain is Photosystem II reaction center protein Psb30 from Euglena myxocylindracea.